Here is a 549-residue protein sequence, read N- to C-terminus: Glucose-6-phosphate isomerase (549 aa).

The Proton donor role is filled by Glu-353. Active-site residues include His-384 and Lys-510.

It belongs to the GPI family.

It localises to the cytoplasm. The catalysed reaction is alpha-D-glucose 6-phosphate = beta-D-fructose 6-phosphate. The protein operates within carbohydrate biosynthesis; gluconeogenesis. Its pathway is carbohydrate degradation; glycolysis; D-glyceraldehyde 3-phosphate and glycerone phosphate from D-glucose: step 2/4. Its function is as follows. Catalyzes the reversible isomerization of glucose-6-phosphate to fructose-6-phosphate. The chain is Glucose-6-phosphate isomerase from Mycolicibacterium smegmatis (strain ATCC 700084 / mc(2)155) (Mycobacterium smegmatis).